Reading from the N-terminus, the 193-residue chain is MAAIRKKLVIVGDGACGKTCLLIVFSKDQFPEVYVPTVFENYIADIEVDGKQVELALWDTAGQEDYDRLRPLSYPDTDVILMCFSIDSPDSLENIPEKWTPEVKHFCPNVPIILVGNKKDLRQDEHTRRELAKMKQEPVRSEEGRDMANRISAFGYLECSAKTKEGVREVFEMATRAGLQVRKNKRRRGCPIL.

A GTP-binding site is contributed by 12-19 (GDGACGKT). The Effector region motif lies at 34-42 (YVPTVFENY). Residues 59-63 (DTAGQ) and 117-120 (NKKD) each bind GTP. Cys190 carries the post-translational modification Cysteine methyl ester. A lipid anchor (S-geranylgeranyl cysteine) is attached at Cys190. Residues 191–193 (PIL) constitute a propeptide, removed in mature form.

This sequence belongs to the small GTPase superfamily. Rho family. In terms of assembly, interacts with RTKN. Interacts with AKAP13. Interacts with DIAPH1. Interacts with PKN2. Interacts with ROCK1 and ROCK2. Interacts with ARHGDIA. Interacts with RIPOR1.

It is found in the cell membrane. Its subcellular location is the cleavage furrow. Regulates a signal transduction pathway linking plasma membrane receptors to the assembly of focal adhesions and actin stress fibers. Serves as a microtubule-dependent signal that is required for the myosin contractile ring formation during cell cycle cytokinesis. Regulates apical junction formation in bronchial epithelial cells. The protein is Rho-related GTP-binding protein RhoC (RHOC) of Bos taurus (Bovine).